The primary structure comprises 344 residues: Anthranilate phosphoribosyltransferase (344 aa).

Residues Gly80, 83–84 (GD), Thr88, 90–93 (NIST), 108–116 (KHGNRSISS), and Ser120 each bind 5-phospho-alpha-D-ribose 1-diphosphate. Gly80 serves as a coordination point for anthranilate. Ser92 is a binding site for Mg(2+). Anthranilate is bound at residue Asn111. Arg166 lines the anthranilate pocket. Mg(2+)-binding residues include Asp229 and Glu230.

Belongs to the anthranilate phosphoribosyltransferase family. As to quaternary structure, homodimer. Requires Mg(2+) as cofactor.

The catalysed reaction is N-(5-phospho-beta-D-ribosyl)anthranilate + diphosphate = 5-phospho-alpha-D-ribose 1-diphosphate + anthranilate. The protein operates within amino-acid biosynthesis; L-tryptophan biosynthesis; L-tryptophan from chorismate: step 2/5. Its function is as follows. Catalyzes the transfer of the phosphoribosyl group of 5-phosphorylribose-1-pyrophosphate (PRPP) to anthranilate to yield N-(5'-phosphoribosyl)-anthranilate (PRA). The chain is Anthranilate phosphoribosyltransferase from Chloroherpeton thalassium (strain ATCC 35110 / GB-78).